Reading from the N-terminus, the 1184-residue chain is Fibulin-2 (1184 aa).

A signal peptide spans 1–27; it reads MVLLWEPAGAWLALGLALALGPSVAAA. Residues 28–177 form a subdomain NA (Cys-rich) region; it reads APRQDCTGVE…ELICYQLPGC (150 aa). Positions 28-444 are n; the sequence is APRQDCTGVE…EGSTKDLIET (417 aa). The subdomain NB (Cys-free) stretch occupies residues 178-444; the sequence is HGNFSDAEEG…EGSTKDLIET (267 aa). N-linked (GlcNAc...) asparagine glycosylation is present at Asn180. Disordered stretches follow at residues 221-293 and 399-437; these read VQAG…MAVT and IPPT…PEGS. A compositionally biased stretch (gly residues) spans 224–236; the sequence is GAGGPPAALGGGS. Over residues 252-261 the composition is skewed to low complexity; the sequence is PRPTAAAALG. The span at 276 to 288 shows a compositional bias: acidic residues; sequence DSEEEEEEEEERE. Ser277 carries the post-translational modification Phosphoserine. Residues 423–436 show a composition bias toward polar residues; the sequence is PNSVHSIPRSSPEG. Cystine bridges form between Cys445–Cys472, Cys446–Cys479, Cys459–Cys480, Cys489–Cys518, Cys502–Cys519, Cys521–Cys545, Cys522–Cys552, Cys535–Cys553, Cys608–Cys620, Cys616–Cys629, Cys631–Cys644, Cys683–Cys693, Cys689–Cys702, Cys704–Cys717, Cys723–Cys736, Cys730–Cys745, Cys751–Cys762, Cys768–Cys781, Cys775–Cys790, Cys796–Cys808, Cys814–Cys827, Cys821–Cys836, Cys843–Cys856, Cys862–Cys875, Cys869–Cys884, Cys886–Cys899, Cys905–Cys917, Cys913–Cys926, Cys928–Cys941, Cys947–Cys956, Cys952–Cys965, Cys967–Cys980, Cys986–Cys998, Cys994–Cys1007, Cys1009–Cys1023, Cys1029–Cys1042, Cys1036–Cys1051, and Cys1056–Cys1068. 3 consecutive Anaphylatoxin-like domains span residues 445-480, 488-519, and 521-553; these read CCAA…RHCC, SCMA…KQCC, and CCGL…LSCC. Asn507 is a glycosylation site (N-linked (GlcNAc...) asparagine). Positions 604–645 constitute an EGF-like 1; calcium-binding domain; it reads DQDECLLLPGELCQHLCINTVGSYHCACFPGFSLQDDGRTCR. One can recognise an EGF-like 2 domain in the interval 679-718; sequence QPNTCKDNGPCKQVCSTVGGSAICSCFPGYAIMADGVSCE. Residues 719-763 form the EGF-like 3; calcium-binding domain; it reads DINECVTDLHTCSRGEHCVNTLGSFHCYKALTCEPGYALKDGECE. Residues 764–809 enclose the EGF-like 4; calcium-binding domain; it reads DVDECAMGTHTCQPGFLCQNTKGSFYCQARQRCMDGFLQDPEGNCV. Positions 810–857 constitute an EGF-like 5; calcium-binding domain; it reads DINECTSLSEPCRPGFSCINTVGSYTCQRNPLICARGYHASDDGTKCV. One can recognise an EGF-like 6; calcium-binding domain in the interval 858 to 900; the sequence is DVNECETGVHRCGEGQVCHNLPGSYRCDCKAGFQRDAFGRGCI. The region spanning 901–942 is the EGF-like 7; calcium-binding domain; sequence DVNECWASPGRLCQHTCENTLGSYRCSCASGFLLAADGKRCE. The region spanning 943-981 is the EGF-like 8; calcium-binding domain; that stretch reads DVNECEAQRCSQECANIYGSYQCYCRQGYQLAEDGHTCT. Residues 982 to 1024 form the EGF-like 9; calcium-binding domain; that stretch reads DIDECAQGAGILCTFRCLNVPGSYQCACPEQGYTMTANGRSCK. Positions 1025–1069 constitute an EGF-like 10; calcium-binding domain; the sequence is DVDECALGTHNCSEAETCHNIQGSFRCLRFECPPNYVQVSKTKCE. Asn1035 carries N-linked (GlcNAc...) asparagine glycosylation. The segment at 1070 to 1184 is domain III; sequence RTTCHDFLEC…MHIFFTTFAL (115 aa).

Belongs to the fibulin family. In terms of assembly, homotrimer; disulfide-linked. Interacts with LAMA2. Interacts with FBN1 (via N-terminal domain). Forms a ternary complex with ELN and FBN1. O-glycosylated with core 1 or possibly core 8 glycans. It is unsure if the O-glycosylation is on Thr-347 or Ser-348. Component of both basement membranes and other connective tissues. Expressed in heart, placenta and ovary.

The protein resides in the secreted. The protein localises to the extracellular space. It is found in the extracellular matrix. In terms of biological role, its binding to fibronectin and some other ligands is calcium dependent. May act as an adapter that mediates the interaction between FBN1 and ELN. This is Fibulin-2 (FBLN2) from Homo sapiens (Human).